Here is a 358-residue protein sequence, read N- to C-terminus: 3-isopropylmalate dehydrogenase (358 aa).

The substrate site is built by R92, R102, R130, and D224. Residues D224, D248, and D252 each coordinate Mg(2+). 282-294 (GSAPDIAGQGIAN) is a binding site for NAD(+).

Belongs to the isocitrate and isopropylmalate dehydrogenases family. LeuB type 1 subfamily. In terms of assembly, homodimer. Requires Mg(2+) as cofactor. It depends on Mn(2+) as a cofactor.

Its subcellular location is the cytoplasm. The enzyme catalyses (2R,3S)-3-isopropylmalate + NAD(+) = 4-methyl-2-oxopentanoate + CO2 + NADH. Its pathway is amino-acid biosynthesis; L-leucine biosynthesis; L-leucine from 3-methyl-2-oxobutanoate: step 3/4. Catalyzes the oxidation of 3-carboxy-2-hydroxy-4-methylpentanoate (3-isopropylmalate) to 3-carboxy-4-methyl-2-oxopentanoate. The product decarboxylates to 4-methyl-2 oxopentanoate. The protein is 3-isopropylmalate dehydrogenase of Bordetella parapertussis (strain 12822 / ATCC BAA-587 / NCTC 13253).